We begin with the raw amino-acid sequence, 173 residues long: uncharacterized protein (173 aa).

The segment at 1 to 23 (ELTSVAGSGRVDSTPLGSRGVTD) is disordered.

Component of the acid-insoluble and acid-soluble organic matrix of calcified layers of the shell (at protein level).

The protein resides in the secreted. This is an uncharacterized protein from Lottia gigantea (Giant owl limpet).